We begin with the raw amino-acid sequence, 819 residues long: Phenylalanine--tRNA ligase beta subunit (819 aa).

Residues 42-154 form the tRNA-binding domain; it reads RGGLRGLVIG…SDAPVGMPAA (113 aa). One can recognise a B5 domain in the interval 412-488; that stretch reads LKPHLISLSF…RIYGYNQVEL (77 aa). Mg(2+) is bound by residues Asp466, Asp472, Glu475, and Glu476. Residues 726-819 enclose the FDX-ACB domain; it reads PRFPEVKRDL…LEQKLGAQLR (94 aa).

The protein belongs to the phenylalanyl-tRNA synthetase beta subunit family. Type 1 subfamily. In terms of assembly, tetramer of two alpha and two beta subunits. The cofactor is Mg(2+).

The protein resides in the cytoplasm. It catalyses the reaction tRNA(Phe) + L-phenylalanine + ATP = L-phenylalanyl-tRNA(Phe) + AMP + diphosphate + H(+). The chain is Phenylalanine--tRNA ligase beta subunit from Porphyromonas gingivalis (strain ATCC BAA-308 / W83).